Here is a 918-residue protein sequence, read N- to C-terminus: UPF0182 protein CPF_0011 (918 aa).

The next 7 membrane-spanning stretches (helical) occupy residues 8-28 (TVLI…NFII), 46-66 (LIAI…VIAI), 91-111 (FLLS…TTQW), 151-171 (AISL…ALGF), 200-220 (LAVL…LKSY), 243-263 (IFYK…FISI), and 271-291 (IIIS…VAIF). Basic and acidic residues predominate over residues 857–869 (EENKNSNKDETPK). The disordered stretch occupies residues 857–876 (EENKNSNKDETPKNEITSDN).

It belongs to the UPF0182 family.

The protein localises to the cell membrane. The sequence is that of UPF0182 protein CPF_0011 from Clostridium perfringens (strain ATCC 13124 / DSM 756 / JCM 1290 / NCIMB 6125 / NCTC 8237 / Type A).